We begin with the raw amino-acid sequence, 424 residues long: Serine--tRNA ligase (424 aa).

Residue 230 to 232 (TAE) coordinates L-serine. 261 to 263 (RSE) provides a ligand contact to ATP. Glutamate 284 contributes to the L-serine binding site. ATP is bound at residue 348–351 (EISS). L-serine is bound at residue serine 384.

This sequence belongs to the class-II aminoacyl-tRNA synthetase family. Type-1 seryl-tRNA synthetase subfamily. In terms of assembly, homodimer. The tRNA molecule binds across the dimer.

It localises to the cytoplasm. It carries out the reaction tRNA(Ser) + L-serine + ATP = L-seryl-tRNA(Ser) + AMP + diphosphate + H(+). The enzyme catalyses tRNA(Sec) + L-serine + ATP = L-seryl-tRNA(Sec) + AMP + diphosphate + H(+). Its pathway is aminoacyl-tRNA biosynthesis; selenocysteinyl-tRNA(Sec) biosynthesis; L-seryl-tRNA(Sec) from L-serine and tRNA(Sec): step 1/1. Functionally, catalyzes the attachment of serine to tRNA(Ser). Is also able to aminoacylate tRNA(Sec) with serine, to form the misacylated tRNA L-seryl-tRNA(Sec), which will be further converted into selenocysteinyl-tRNA(Sec). The protein is Serine--tRNA ligase of Streptococcus pneumoniae (strain ATCC 700669 / Spain 23F-1).